The following is a 764-amino-acid chain: 5-methyltetrahydropteroyltriglutamate--homocysteine methyltransferase (764 aa).

5-methyltetrahydropteroyltri-L-glutamate contacts are provided by residues 16–19 (RELK) and Lys117. Residues 442–444 (IGS) and Glu495 each bind L-homocysteine. L-methionine contacts are provided by residues 442-444 (IGS) and Glu495. Residues 526-527 (RC) and Trp572 contribute to the 5-methyltetrahydropteroyltri-L-glutamate site. Residue Asp610 coordinates L-homocysteine. Position 610 (Asp610) interacts with L-methionine. Residue Glu616 coordinates 5-methyltetrahydropteroyltri-L-glutamate. Residues His652, Cys654, and Glu676 each contribute to the Zn(2+) site. His705 (proton donor) is an active-site residue. A Zn(2+)-binding site is contributed by Cys737.

The protein belongs to the vitamin-B12 independent methionine synthase family. Requires Zn(2+) as cofactor.

It carries out the reaction 5-methyltetrahydropteroyltri-L-glutamate + L-homocysteine = tetrahydropteroyltri-L-glutamate + L-methionine. Its pathway is amino-acid biosynthesis; L-methionine biosynthesis via de novo pathway; L-methionine from L-homocysteine (MetE route): step 1/1. Its function is as follows. Catalyzes the transfer of a methyl group from 5-methyltetrahydrofolate to homocysteine resulting in methionine formation. The chain is 5-methyltetrahydropteroyltriglutamate--homocysteine methyltransferase from Bordetella pertussis (strain Tohama I / ATCC BAA-589 / NCTC 13251).